Reading from the N-terminus, the 156-residue chain is D-aminoacyl-tRNA deacylase (156 aa).

The Gly-cisPro motif, important for rejection of L-amino acids motif lies at 137–138 (GP).

It belongs to the DTD family. In terms of assembly, homodimer.

It localises to the cytoplasm. The catalysed reaction is glycyl-tRNA(Ala) + H2O = tRNA(Ala) + glycine + H(+). The enzyme catalyses a D-aminoacyl-tRNA + H2O = a tRNA + a D-alpha-amino acid + H(+). Functionally, an aminoacyl-tRNA editing enzyme that deacylates mischarged D-aminoacyl-tRNAs. Also deacylates mischarged glycyl-tRNA(Ala), protecting cells against glycine mischarging by AlaRS. Acts via tRNA-based rather than protein-based catalysis; rejects L-amino acids rather than detecting D-amino acids in the active site. By recycling D-aminoacyl-tRNA to D-amino acids and free tRNA molecules, this enzyme counteracts the toxicity associated with the formation of D-aminoacyl-tRNA entities in vivo and helps enforce protein L-homochirality. The protein is D-aminoacyl-tRNA deacylase of Ruegeria sp. (strain TM1040) (Silicibacter sp.).